The sequence spans 142 residues: Large ribosomal subunit protein uL13 (142 aa).

Belongs to the universal ribosomal protein uL13 family. As to quaternary structure, part of the 50S ribosomal subunit.

In terms of biological role, this protein is one of the early assembly proteins of the 50S ribosomal subunit, although it is not seen to bind rRNA by itself. It is important during the early stages of 50S assembly. The protein is Large ribosomal subunit protein uL13 of Alkalilimnicola ehrlichii (strain ATCC BAA-1101 / DSM 17681 / MLHE-1).